The following is a 347-amino-acid chain: Protein-glutamate methylesterase/protein-glutamine glutaminase (347 aa).

The region spanning 6-123 is the Response regulatory domain; that stretch reads RVLVVDDSPT…HRPFGDLAEK (118 aa). D57 is subject to 4-aspartylphosphate. In terms of domain architecture, CheB-type methylesterase spans 150–342; it reads FRVGRKIVAI…EEILKLTAAR (193 aa). Catalysis depends on residues S162, H188, and D284.

Belongs to the CheB family. Phosphorylated by CheA. Phosphorylation of the N-terminal regulatory domain activates the methylesterase activity.

It localises to the cytoplasm. It catalyses the reaction [protein]-L-glutamate 5-O-methyl ester + H2O = L-glutamyl-[protein] + methanol + H(+). The enzyme catalyses L-glutaminyl-[protein] + H2O = L-glutamyl-[protein] + NH4(+). Involved in chemotaxis. Part of a chemotaxis signal transduction system that modulates chemotaxis in response to various stimuli. Catalyzes the demethylation of specific methylglutamate residues introduced into the chemoreceptors (methyl-accepting chemotaxis proteins or MCP) by CheR. Also mediates the irreversible deamidation of specific glutamine residues to glutamic acid. The polypeptide is Protein-glutamate methylesterase/protein-glutamine glutaminase (Rhizobium etli (strain ATCC 51251 / DSM 11541 / JCM 21823 / NBRC 15573 / CFN 42)).